The following is a 363-amino-acid chain: UDP-N-acetylglucosamine--N-acetylmuramyl-(pentapeptide) pyrophosphoryl-undecaprenol N-acetylglucosamine transferase (363 aa).

Residues 12-14 (TAG), arginine 166, serine 196, and glutamine 291 contribute to the UDP-N-acetyl-alpha-D-glucosamine site.

It belongs to the glycosyltransferase 28 family. MurG subfamily.

Its subcellular location is the cell inner membrane. It carries out the reaction di-trans,octa-cis-undecaprenyl diphospho-N-acetyl-alpha-D-muramoyl-L-alanyl-D-glutamyl-meso-2,6-diaminopimeloyl-D-alanyl-D-alanine + UDP-N-acetyl-alpha-D-glucosamine = di-trans,octa-cis-undecaprenyl diphospho-[N-acetyl-alpha-D-glucosaminyl-(1-&gt;4)]-N-acetyl-alpha-D-muramoyl-L-alanyl-D-glutamyl-meso-2,6-diaminopimeloyl-D-alanyl-D-alanine + UDP + H(+). The protein operates within cell wall biogenesis; peptidoglycan biosynthesis. Functionally, cell wall formation. Catalyzes the transfer of a GlcNAc subunit on undecaprenyl-pyrophosphoryl-MurNAc-pentapeptide (lipid intermediate I) to form undecaprenyl-pyrophosphoryl-MurNAc-(pentapeptide)GlcNAc (lipid intermediate II). The polypeptide is UDP-N-acetylglucosamine--N-acetylmuramyl-(pentapeptide) pyrophosphoryl-undecaprenol N-acetylglucosamine transferase (Legionella pneumophila (strain Lens)).